Consider the following 965-residue polypeptide: Glycine dehydrogenase (decarboxylating) 1 (965 aa).

Position 713 is an N6-(pyridoxal phosphate)lysine (K713).

Belongs to the GcvP family. The glycine cleavage system is composed of four proteins: P, T, L and H. Pyridoxal 5'-phosphate serves as cofactor.

It carries out the reaction N(6)-[(R)-lipoyl]-L-lysyl-[glycine-cleavage complex H protein] + glycine + H(+) = N(6)-[(R)-S(8)-aminomethyldihydrolipoyl]-L-lysyl-[glycine-cleavage complex H protein] + CO2. Its function is as follows. The glycine cleavage system catalyzes the degradation of glycine. The P protein binds the alpha-amino group of glycine through its pyridoxal phosphate cofactor; CO(2) is released and the remaining methylamine moiety is then transferred to the lipoamide cofactor of the H protein. In Colwellia psychrerythraea (strain 34H / ATCC BAA-681) (Vibrio psychroerythus), this protein is Glycine dehydrogenase (decarboxylating) 1.